A 362-amino-acid polypeptide reads, in one-letter code: Prostaglandin E2 receptor EP2 subtype (362 aa).

At 1–24 (MDNFLNDSKLMEDCKSRQWLLSGE) the chain is on the extracellular side. The N-linked (GlcNAc...) asparagine glycan is linked to Asn-6. The chain crosses the membrane as a helical span at residues 25 to 48 (SPAISSVMFSAGVLGNLIALALLA). Topologically, residues 49 to 66 (RRWRGDTGCSAGSRTSIS) are cytoplasmic. Residues 67–92 (LFHVLVTELVLTDLLGTCLISPVVLA) form a helical membrane-spanning segment. At 93-112 (SYSRNQTLVALAPESHACTY) the chain is on the extracellular side. Cys-110 and Cys-188 are joined by a disulfide. Residues 113-133 (FAFTMTFFSLATMLMLFAMAL) form a helical membrane-spanning segment. Residues 134–152 (ERYLSIGYPYFYRRHLSRR) lie on the Cytoplasmic side of the membrane. The helical transmembrane segment at 153 to 177 (GGLAVLPVIYGASLLFCSLPLLNYG) threads the bilayer. Residues 178 to 199 (EYVQYCPGTWCFIRHGRTAYLQ) lie on the Extracellular side of the membrane. The helical transmembrane segment at 200–224 (LYATMLLLLIVAVLACNISVILNLI) threads the bilayer. Over 225 to 262 (RMHRRSRRSRCGLSGSSLRGPGSRRRGERTSMAEETDH) the chain is Cytoplasmic. A disordered region spans residues 234–255 (RCGLSGSSLRGPGSRRRGERTS). A compositionally biased stretch (low complexity) spans 235 to 245 (CGLSGSSLRGP). A helical membrane pass occupies residues 263–286 (LILLAIMTITFAICSLPFTIFAYM). Over 287 to 299 (DETSSLKEKWDLR) the chain is Extracellular. The chain crosses the membrane as a helical span at residues 300-323 (ALRFLSVNSIIDPWVFAILRPPVL). Over 324–362 (RLMRSVLCCRTSLRTQEAQQTSCSTQSSASKQTDLCGQL) the chain is Cytoplasmic.

Belongs to the G-protein coupled receptor 1 family.

It is found in the cell membrane. In terms of biological role, receptor for prostaglandin E2 (PGE2). The activity of this receptor is mediated by G(s) proteins that stimulate adenylate cyclase. The subsequent raise in intracellular cAMP is responsible for the relaxing effect of this receptor on smooth muscle. This is Prostaglandin E2 receptor EP2 subtype (Ptger2) from Mus musculus (Mouse).